A 398-amino-acid chain; its full sequence is Lysophosphatidylserine lipase ABHD12 (398 aa).

Over 1 to 74 the chain is Cytoplasmic; that stretch reads MRKRTEPVAL…RKGLWLRLRK (74 aa). Residues 75-95 form a helical membrane-spanning segment; that stretch reads ILFCVLGLYIAIPFLIKLCPG. At 96–398 the chain is on the extracellular side; sequence IQAKLIFLNF…LGKSEPEHQH (303 aa). Residue N123 is glycosylated (N-linked (GlcNAc...) asparagine). S246 (nucleophile) is an active-site residue. Residues D333 and H372 each act as charge relay system in the active site.

This sequence belongs to the serine esterase family.

The protein localises to the endoplasmic reticulum membrane. It catalyses the reaction 1-(9Z-octadecenoyl)-sn-glycero-3-phospho-L-serine + H2O = sn-glycero-3-phospho-L-serine + (9Z)-octadecenoate + H(+). The catalysed reaction is 1-(9Z-octadecenoyl)-sn-glycero-3-phospho-(1'-sn-glycerol) + H2O = sn-glycero-3-phospho-(1'-sn-glycerol) + (9Z)-octadecenoate + H(+). It carries out the reaction 1-(9Z-octadecenoyl)-sn-glycero-3-phospho-(1D-myo-inositol) + H2O = sn-glycero-3-phospho-1D-myo-inositol + (9Z)-octadecenoate + H(+). The enzyme catalyses 1-(9Z-octadecenoyl)-sn-glycero-3-phosphoethanolamine + H2O = sn-glycero-3-phosphoethanolamine + (9Z)-octadecenoate + H(+). It catalyses the reaction 1-(9Z-octadecenoyl)-sn-glycero-3-phosphocholine + H2O = 1-(9Z-octadecenoyl)-sn-glycerol + phosphocholine + H(+). The catalysed reaction is 2-(9Z-octadecenoyl)-glycerol + H2O = glycerol + (9Z)-octadecenoate + H(+). It carries out the reaction 1-hexadecanoyl-sn-glycero-3-phospho-L-serine + H2O = sn-glycero-3-phospho-L-serine + hexadecanoate + H(+). The enzyme catalyses 2-(5Z,8Z,11Z,14Z-eicosatetraenoyl)-glycerol + H2O = glycerol + (5Z,8Z,11Z,14Z)-eicosatetraenoate + H(+). It catalyses the reaction Hydrolyzes glycerol monoesters of long-chain fatty acids.. The catalysed reaction is 1-decanoylglycerol + H2O = decanoate + glycerol + H(+). It carries out the reaction 1-dodecanoylglycerol + H2O = dodecanoate + glycerol + H(+). The enzyme catalyses 1-tetradecanoylglycerol + H2O = tetradecanoate + glycerol + H(+). It catalyses the reaction 2-hexadecanoylglycerol + H2O = glycerol + hexadecanoate + H(+). The catalysed reaction is 1-(9Z-octadecenoyl)-glycerol + H2O = glycerol + (9Z)-octadecenoate + H(+). It carries out the reaction 2-(9Z,12Z-octadecadienoyl)-glycerol + H2O = (9Z,12Z)-octadecadienoate + glycerol + H(+). The enzyme catalyses 1-(5Z,8Z,11Z,14Z-eicosatetraenoyl)-glycerol + H2O = glycerol + (5Z,8Z,11Z,14Z)-eicosatetraenoate + H(+). It catalyses the reaction 1-(9Z,12Z-octadecadienoyl)-glycerol + H2O = (9Z,12Z)-octadecadienoate + glycerol + H(+). The catalysed reaction is 1-hexadecanoylglycerol + H2O = glycerol + hexadecanoate + H(+). It carries out the reaction 1-octadecanoylglycerol + H2O = octadecanoate + glycerol + H(+). The enzyme catalyses 1-octadecanoyl-2-(9,10-epoxyoctadecanoyl)-sn-glycero-3-phospho-L-serine + H2O = 9,10-epoxyoctadecanoate + 1-octadecanoyl-sn-glycero-3-phosphoserine + H(+). It catalyses the reaction 1-octadecanoyl-2-(10-hydroxyoctadecanoyl)-sn-glycero-3-phospho-L-serine + H2O = 1-octadecanoyl-sn-glycero-3-phosphoserine + 10-hydroxyoctadecanoate + H(+). The catalysed reaction is 1-hexadecanoyl-2-(10-hydroxyoctadecanoyl)-sn-glycero-3-phospho-L-serine + H2O = 10-hydroxyoctadecanoate + 1-hexadecanoyl-sn-glycero-3-phospho-L-serine + H(+). Lysophosphatidylserine (LPS) lipase that mediates the hydrolysis of lysophosphatidylserine, a class of signaling lipids that regulates immunological and neurological processes. Represents a major lysophosphatidylserine lipase in the brain, thereby playing a key role in the central nervous system. Also able to hydrolyze oxidized phosphatidylserine; oxidized phosphatidylserine is produced in response to severe inflammatory stress and constitutes a proapoptotic 'eat me' signal. Also has monoacylglycerol (MAG) lipase activity: hydrolyzes 2-arachidonoylglycerol (2-AG), thereby acting as a regulator of endocannabinoid signaling pathways. Has a strong preference for very-long-chain lipid substrates; substrate specificity is likely due to improved catalysis and not improved substrate binding. The chain is Lysophosphatidylserine lipase ABHD12 from Macaca fascicularis (Crab-eating macaque).